Here is a 205-residue protein sequence, read N- to C-terminus: MIGRLRGIILEKQPPQVLLETHGVGYEVFMPMTCFYALPETGQEAVIFTHFVVREDAQLLFGFIHKQERVLFRELIKVNGVGPKLALAILSGMSAQQFISAVERQEINALVKLPGVGKKTAERLVVEMKDRFKGLSGDLFVPQGAGEIPAAIDAPAMPADPEGEAVAALVALGYKPQEASRMVSKVASAGSDCEMLIRDALRAAL.

The segment at 1–64 is domain I; that stretch reads MIGRLRGIIL…EDAQLLFGFI (64 aa). The segment at 65–143 is domain II; the sequence is HKQERVLFRE…GLSGDLFVPQ (79 aa). A flexible linker region spans residues 144–156; it reads GAGEIPAAIDAPA. Residues 157 to 205 are domain III; it reads MPADPEGEAVAALVALGYKPQEASRMVSKVASAGSDCEMLIRDALRAAL.

The protein belongs to the RuvA family. As to quaternary structure, homotetramer. Forms an RuvA(8)-RuvB(12)-Holliday junction (HJ) complex. HJ DNA is sandwiched between 2 RuvA tetramers; dsDNA enters through RuvA and exits via RuvB. An RuvB hexamer assembles on each DNA strand where it exits the tetramer. Each RuvB hexamer is contacted by two RuvA subunits (via domain III) on 2 adjacent RuvB subunits; this complex drives branch migration. In the full resolvosome a probable DNA-RuvA(4)-RuvB(12)-RuvC(2) complex forms which resolves the HJ.

The protein resides in the cytoplasm. In terms of biological role, the RuvA-RuvB-RuvC complex processes Holliday junction (HJ) DNA during genetic recombination and DNA repair, while the RuvA-RuvB complex plays an important role in the rescue of blocked DNA replication forks via replication fork reversal (RFR). RuvA specifically binds to HJ cruciform DNA, conferring on it an open structure. The RuvB hexamer acts as an ATP-dependent pump, pulling dsDNA into and through the RuvAB complex. HJ branch migration allows RuvC to scan DNA until it finds its consensus sequence, where it cleaves and resolves the cruciform DNA. The sequence is that of Holliday junction branch migration complex subunit RuvA from Sodalis glossinidius (strain morsitans).